We begin with the raw amino-acid sequence, 349 residues long: MIRQAIAKVVELRDLSEGEMIEVMNQIMSGECTPAQIGSFITALRMKGETIAEISGAARVMRERATPIRVGRNVLDIDRDDINLDQETILDVVGTGGDGTNTFNISTTVSFIVSACGVKVAKHGNRSVSSACGSADVLEKLGVNLDVTPEQVERCINEIGIGFLFAPALHGAMKHAIGPRREIGIRTIFNILGPLTNPANADCQVMGVYREELVAKMAGVLHHLGCKRGFVVHGRDGMDEITLTGETAAAEVSPEGVRLFTITPEEFGFSRCSMQALKGGDAVANAAIVRAVLGGEPGPRREIVLLNAGFALLAAGRCATVAAGIDLAAQAIDSGAALMQIEKLATLTN.

Residues Gly-94, 97–98 (GD), Thr-102, 104–107 (NIST), 122–130 (KHGNRSVSS), and Ser-134 each bind 5-phospho-alpha-D-ribose 1-diphosphate. Gly-94 is a binding site for anthranilate. Residue Ser-106 coordinates Mg(2+). Asn-125 provides a ligand contact to anthranilate. Arg-180 contributes to the anthranilate binding site. The Mg(2+) site is built by Asp-239 and Glu-240.

This sequence belongs to the anthranilate phosphoribosyltransferase family. As to quaternary structure, homodimer. The cofactor is Mg(2+).

The enzyme catalyses N-(5-phospho-beta-D-ribosyl)anthranilate + diphosphate = 5-phospho-alpha-D-ribose 1-diphosphate + anthranilate. It participates in amino-acid biosynthesis; L-tryptophan biosynthesis; L-tryptophan from chorismate: step 2/5. In terms of biological role, catalyzes the transfer of the phosphoribosyl group of 5-phosphorylribose-1-pyrophosphate (PRPP) to anthranilate to yield N-(5'-phosphoribosyl)-anthranilate (PRA). The chain is Anthranilate phosphoribosyltransferase from Trichlorobacter lovleyi (strain ATCC BAA-1151 / DSM 17278 / SZ) (Geobacter lovleyi).